The primary structure comprises 313 residues: WD repeat-containing protein 82-B (313 aa).

WD repeat units lie at residues 19–58 (ENSDKINCFDFSPTGETVISSSDDDSIVLYDCQEGKPKRT), 105–144 (GHSKRVVSLSMSPVDDTFISGSLDKTIRLWDLRSPNCQGL), 146–184 (HLQGKPVCSFDPEGLIFAAGINSEMVKLYDLRSFDKGPF), 192–231 (DRTCEWTALKFSNDGKLILLSTNGGFLRLVDAFKGAVMHT), 236–276 (NNSK…KVAV), and 280–313 (KHTGPITCLQFNPKFMTFASACSNMAFWLPTIDD).

Belongs to the WD repeat SWD2 family. Component of the SET1/COMPASS complex. Component of the PNUTS-PP1 phosphatase complex.

The protein localises to the nucleus. It is found in the chromosome. It localises to the cytoplasm. In terms of biological role, regulatory component of the SET1/COMPASS complex implicated in the tethering of this complex to transcriptional start sites of active genes. Facilitates histone H3 'Lys-4' methylation (H3K4me) via recruitment of the SETD1A or SETD1B to the 'Ser-5' phosphorylated C-terminal domain (CTD) of RNA polymerase II large subunit (POLR2A). Component of the PNUTS-PP1 protein phosphatase complex, a protein phosphatase 1 (PP1) complex that promotes RNA polymerase II transcription pause-release, allowing transcription elongation. This Xenopus laevis (African clawed frog) protein is WD repeat-containing protein 82-B (wdr82-b).